Consider the following 122-residue polypeptide: Small ribosomal subunit protein bS6 (122 aa).

Belongs to the bacterial ribosomal protein bS6 family.

Functionally, binds together with bS18 to 16S ribosomal RNA. The protein is Small ribosomal subunit protein bS6 of Neisseria meningitidis serogroup C (strain 053442).